A 457-amino-acid polypeptide reads, in one-letter code: MPPSSGQLLGDEEREPTSTPAIPEEGVYKVKYSNRRTNIVRLLPNGFQERKLRRLADLSAKLFNEVNYERRQQFFHEGKVDIKGTYKKYYEKYKEKLRTNAQAVLNKNNEAWSSFFSLLNLKKEGKLPQHIKHVSPPGYCKDRKTKKRKLILIVRQDRYKVDAENNKLILKDFNMEIEFVGRLRWYGKQGRLEIIFDETRNAWYAHIPVEVGVEETGKKSKHVVKGERKSIQIAKPKGNKVASIDLGINVIASVVVSDGTWLLYKGIRTKEDYFYFHKRIAEVQSLADRTRNIGEYEAYLELLREERRLFKKLKRRLLHLYRNLASHLIKTLHELGVSTIYLGNPFNIVQEKGDNFMTDKWPYRKLMHAIELKAQEYGMKVYEVDEYNTTKYCAYHDVKVKRNPRGVVICPKGHKLHSDLNGALNILKKAVGVVVNEVKKPLSFIVDHNRVAPIKGV.

The tract at residues 1-22 (MPPSSGQLLGDEEREPTSTPAI) is disordered.

In the N-terminal section; belongs to the transposase 2 family. This sequence in the C-terminal section; belongs to the transposase 35 family.

The polypeptide is TnpB-like protein ORF457 (Acidianus two-tailed virus (ATV)).